The sequence spans 664 residues: MIGKIINERYKIVDKLGGGGMSTVYLAEDTILNIKVAIKAIFIPPREKEETLKRFEREVHNSSQLSHQNIVSMIDVDEEDDCYYLVMEYIEGPTLSEYIESHGPLSVDTAINFTNQILDGIKHAHDMRIVHRDIKPQNILIDSNKTLKIFDFGIAKALSETSLTQTNHVLGTVQYFSPEQAKGEATDECTDIYSIGIVLYEMLVGEPPFNGETAVSIAIKHIQDSVPNVTTDVRKDIPQSLSNVILRATEKDKANRYKTIQEMKDDLSSVLHENRANEDVYELDKMKTIAVPLKKEDLAKHISEHKSNQPKRETTQVPIVNGPAHHQQFQKPEGTVYEPKPKKKSTRKIVLLSLIFSLLMIALVSFVAMAMFGNKYEETPDVIGKSVKEAEQIFNKNNLKLGKISRSYSDKYPENEIIKTTPNTGERVERGDSVDVVISKGPEKVKMPNVIGLPKEEALQKLKSLGLKDVTIEKVYNNQAPKGYIANQSVTANTEIAIHDSNIKLYESLGIKQVYVEDFEHKSFSKAKKALEEKGFKVESKEEYSDDIDEGDVISQSPKGKSVDEGSTISFVVSKGKKSDSSDVKTTTESVDVPYTGKNDKSQKVKVYIKDKDNDGSTEKGSFDITSDQRIDIPLRIEKGKTASYIVKVDGKTVAEKEVSYDDV.

The Cytoplasmic segment spans residues 1 to 348; it reads MIGKIINERY…PKPKKKSTRK (348 aa). A Protein kinase domain is found at 10–271; sequence YKIVDKLGGG…EMKDDLSSVL (262 aa). ATP contacts are provided by residues 16–24 and lysine 39; that span reads LGGGGMSTV. The active-site Proton acceptor is aspartate 133. A phosphothreonine; by autocatalysis mark is found at threonine 161, threonine 164, and threonine 166. The chain crosses the membrane as a helical span at residues 349-369; it reads IVLLSLIFSLLMIALVSFVAM. The Extracellular portion of the chain corresponds to 370–664; sequence AMFGNKYEET…AEKEVSYDDV (295 aa). 3 consecutive PASTA domains span residues 373–440, 441–509, and 510–575; these read GNKY…VISK, GPEK…YESL, and GIKQ…VVSK. The interval 541–565 is disordered; that stretch reads KEEYSDDIDEGDVISQSPKGKSVDE. Polar residues predominate over residues 554–565; the sequence is ISQSPKGKSVDE.

It belongs to the protein kinase superfamily. Ser/Thr protein kinase family. As to quaternary structure, homodimer.

Its subcellular location is the spore membrane. The enzyme catalyses L-seryl-[protein] + ATP = O-phospho-L-seryl-[protein] + ADP + H(+). It catalyses the reaction L-threonyl-[protein] + ATP = O-phospho-L-threonyl-[protein] + ADP + H(+). Its function is as follows. Probable protein kinase that is responsible for triggering spore germination in response to muropeptides, signaling bacteria to exit dormancy. PrkC is thus a germination receptor that binds peptidoglycan fragments containing either m-Dpm (meso-diaminopimelate) or L-lys, which act as spore germinants. Probably autophosphorylates and phosphorylates FusA (EF-G, elongation factor G); the latter modification is likely necessary for germination in response to peptidoglycan. The sequence is that of Serine/threonine-protein kinase PrkC (prkC) from Staphylococcus aureus (strain Newman).